A 175-amino-acid chain; its full sequence is UPF0398 protein SPH_0478 (175 aa).

Belongs to the UPF0398 family.

This is UPF0398 protein SPH_0478 from Streptococcus pneumoniae (strain Hungary19A-6).